The sequence spans 157 residues: Protein Smg homolog (157 aa).

This sequence belongs to the Smg family.

The protein is Protein Smg homolog of Xanthomonas oryzae pv. oryzae (strain MAFF 311018).